We begin with the raw amino-acid sequence, 639 residues long: Mediator of RNA polymerase II transcription subunit 17 (639 aa).

The protein belongs to the Mediator complex subunit 17 family. Component of the Mediator complex.

Its subcellular location is the nucleus. In terms of biological role, component of the Mediator complex, a coactivator involved in the regulated transcription of nearly all RNA polymerase II-dependent genes. Mediator functions as a bridge to convey information from gene-specific regulatory proteins to the basal RNA polymerase II transcription machinery. Mediator is recruited to promoters by direct interactions with regulatory proteins and serves as a scaffold for the assembly of a functional preinitiation complex with RNA polymerase II and the general transcription factors. The protein is Mediator of RNA polymerase II transcription subunit 17 (med17) of Xenopus tropicalis (Western clawed frog).